The primary structure comprises 539 residues: MAKIIAFDEDARRGLERGLNILADTVKVTLGPGGCNVVLEKKWGAPTITNDGVSIAKEIELDDPYEKIGAELVKEVAKKTDDVAGDGTTTATVLAQALVKEGLRNVAAGADPISLKRGIEKAVEAVTAELVGNAKEVESKAQIAATASISAGDTTIGDIIAEAIDKVGKEGVVTVEESNTFGTELELTEGMRFDKGFLSQYFVTDQDRQEAVFEDAYILIANQKISSIKDLLPIVDKVIQANKQLLIIAEDVDGEALATLIVNKIRGIFKSVAVKAPGFGDRRKAMLQDIAILTGGQVISEEVGLKLENVTLDLLGKARKVVITKDETTIVEGAGDPDQIAGRVAQIRGEIDNSDSDYDREKLQERLAKLAGGVAVIKAGAATEVELKERKHRIEDAVRNAKAAVEEGIVAGGGVALIQAGKLAFEKLSLEGDEATGANIVKVAIEAPMKQIAINAGMEPGVVVARVRELPLGHGLNAATGEYVDMLIAGINDPVKVTRSALQNAASIAGLFLTTEAVVADKPEKAAPVAAEPGAGMDF.

Residues T29–P32, D86–T90, G413, N477–A479, and D493 each bind ATP.

It belongs to the chaperonin (HSP60) family. Forms a cylinder of 14 subunits composed of two heptameric rings stacked back-to-back. Interacts with the co-chaperonin GroES.

Its subcellular location is the cytoplasm. The enzyme catalyses ATP + H2O + a folded polypeptide = ADP + phosphate + an unfolded polypeptide.. Together with its co-chaperonin GroES, plays an essential role in assisting protein folding. The GroEL-GroES system forms a nano-cage that allows encapsulation of the non-native substrate proteins and provides a physical environment optimized to promote and accelerate protein folding. The chain is Chaperonin GroEL from Leifsonia xyli subsp. xyli (strain CTCB07).